A 121-amino-acid chain; its full sequence is Small ribosomal subunit protein uS13 (121 aa).

The tract at residues 91–121 (HRRGLPVRGQNTKNNARTRKGKKASMAGKKK) is disordered. Residues 106–121 (ARTRKGKKASMAGKKK) are compositionally biased toward basic residues.

This sequence belongs to the universal ribosomal protein uS13 family. In terms of assembly, part of the 30S ribosomal subunit. Forms a loose heterodimer with protein S19. Forms two bridges to the 50S subunit in the 70S ribosome.

Located at the top of the head of the 30S subunit, it contacts several helices of the 16S rRNA. In the 70S ribosome it contacts the 23S rRNA (bridge B1a) and protein L5 of the 50S subunit (bridge B1b), connecting the 2 subunits; these bridges are implicated in subunit movement. Contacts the tRNAs in the A and P-sites. The sequence is that of Small ribosomal subunit protein uS13 from Lacticaseibacillus paracasei (strain ATCC 334 / BCRC 17002 / CCUG 31169 / CIP 107868 / KCTC 3260 / NRRL B-441) (Lactobacillus paracasei).